We begin with the raw amino-acid sequence, 156 residues long: 3-dehydroquinate dehydratase (156 aa).

Catalysis depends on Y22, which acts as the Proton acceptor. Residues N73, H79, and D86 each contribute to the substrate site. H99 (proton donor) is an active-site residue. Substrate is bound by residues 100-101 (LS) and R110.

It belongs to the type-II 3-dehydroquinase family. Homododecamer.

The enzyme catalyses 3-dehydroquinate = 3-dehydroshikimate + H2O. Its pathway is metabolic intermediate biosynthesis; chorismate biosynthesis; chorismate from D-erythrose 4-phosphate and phosphoenolpyruvate: step 3/7. Its function is as follows. Catalyzes a trans-dehydration via an enolate intermediate. The sequence is that of 3-dehydroquinate dehydratase from Nitratiruptor sp. (strain SB155-2).